The primary structure comprises 336 residues: Protein-arginine N-acetylglucosaminyltransferase SseK1 (336 aa).

An N-beta-linked (GlcNAc) arginine; by autocatalysis glycan is attached at R24. UDP-N-acetyl-alpha-D-glucosamine is bound by residues 50 to 52 (QWF) and Y74. A glycan (N-beta-linked (GlcNAc) arginine; by autocatalysis) is linked at R152. Residues 223–225 (DAD) carry the DXD motif motif. 224–225 (AD) contacts UDP-N-acetyl-alpha-D-glucosamine. Residue D225 coordinates Mn(2+). E255 functions as the Proton acceptor in the catalytic mechanism. The Mn(2+) site is built by N322 and S324. UDP-N-acetyl-alpha-D-glucosamine is bound by residues S324 and S329. N-beta-linked (GlcNAc) arginine; by autocatalysis glycosylation is present at R333.

The protein belongs to the glycosyltransferase NleB family. Mn(2+) is required as a cofactor. In terms of processing, auto-glycosylated: arginine GlcNAcylation is required for activity toward death domain-containing host target proteins.

It is found in the secreted. The protein resides in the host cytoplasm. It localises to the host cytosol. It catalyses the reaction L-arginyl-[protein] + UDP-N-acetyl-alpha-D-glucosamine = N(omega)-(N-acetyl-beta-D-glucosaminyl)-L-arginyl-[protein] + UDP + H(+). Its activity is regulated as follows. Protein-arginine N-acetylglucosaminyltransferase activity is inhibited by 100066N compound (flavone analog) and 102644N compound (a substituted isoxazole). Its function is as follows. Protein-arginine N-acetylglucosaminyltransferase effector that disrupts TNF signaling in infected cells, including NF-kappa-B signaling, apoptosis and necroptosis. Acts by catalyzing the transfer of a single N-acetylglucosamine (GlcNAc) to a conserved arginine residue in the death domain of host proteins TRADD and, to a lower extent, FADD: arginine GlcNAcylation prevents homotypic/heterotypic death domain interactions and assembly of the oligomeric TNF-alpha receptor complex, thereby disrupting TNF signaling. Also acts on host proteins without a death domain: catalyzes arginine GlcNAcylation of host GAPDH protein, thereby preventing GAPDH interaction with TRAF2, leading to inhibit NF-kappa-B signaling. Catalyzes GlcNAcylation of host tubulin-folding cofactor TBCB, thereby promoting microtubule stability. Also mediates auto-GlcNAcylation, which is required for activity toward death domain-containing host target proteins. The chain is Protein-arginine N-acetylglucosaminyltransferase SseK1 from Salmonella enteritidis (strain 2009K0958).